The primary structure comprises 488 residues: Zinc metalloproteinase-disintegrin 8 (488 aa).

Residues 1 to 20 form the signal peptide; that stretch reads MIQVLLVTICLAVFPYQGSS. Positions 21-191 are excised as a propeptide; sequence IILESGNVND…KASQLNLPPE (171 aa). Residues 198–396 form the Peptidase M12B domain; that stretch reads TYIELVVVAD…STTRCLHNEP (199 aa). Residues Glu-201 and Asp-285 each contribute to the Ca(2+) site. N-linked (GlcNAc...) asparagine glycosylation occurs at Asn-296. 3 disulfide bridges follow: Cys-309/Cys-391, Cys-349/Cys-373, and Cys-351/Cys-356. Zn(2+) is bound at residue His-334. The active site involves Glu-335. 2 residues coordinate Zn(2+): His-338 and His-344. The Ca(2+) site is built by Cys-391, Asn-394, Asn-409, Glu-413, Glu-416, and Asp-419. In terms of domain architecture, Disintegrin spans 404 to 488; that stretch reads PPFCGNYFKE…ADCPRNGLYG (85 aa). Intrachain disulfides connect Cys-407–Cys-426, Cys-418–Cys-436, Cys-420–Cys-431, Cys-430–Cys-453, Cys-444–Cys-450, Cys-449–Cys-474, and Cys-462–Cys-481. The Cell attachment site motif lies at 466 to 468; it reads RGD.

It belongs to the venom metalloproteinase (M12B) family. P-II subfamily. Requires Zn(2+) as cofactor. In terms of tissue distribution, expressed by the venom gland.

The protein localises to the secreted. Functionally, inhibits ADP-induced platelet aggregation (probably by binding integrin alpha-IIb/beta-3 (ITGA2B/ITGB3)) and degrades fibrinogen. The sequence is that of Zinc metalloproteinase-disintegrin 8 from Crotalus adamanteus (Eastern diamondback rattlesnake).